The sequence spans 89 residues: Cell division protein FtsB (89 aa).

At 1–3 the chain is on the cytoplasmic side; the sequence is MRP. The chain crosses the membrane as a helical span at residues 4–21; the sequence is IIAILIALFILLQYQLWF. Topologically, residues 22-89 are periplasmic; the sequence is AAGGIVSVHH…KNEVFYQIVK (68 aa). Residues 29-62 are a coiled coil; sequence VHHLNENINHQIMENQKLKDRNTALLADIDDLKH.

It belongs to the FtsB family. As to quaternary structure, part of a complex composed of FtsB, FtsL and FtsQ.

Its subcellular location is the cell inner membrane. Its function is as follows. Essential cell division protein. May link together the upstream cell division proteins, which are predominantly cytoplasmic, with the downstream cell division proteins, which are predominantly periplasmic. This Coxiella burnetii (strain RSA 493 / Nine Mile phase I) protein is Cell division protein FtsB.